A 291-amino-acid chain; its full sequence is Small ribosomal subunit protein uS2 (291 aa).

The segment at 235 to 291 (NLQEDEESGDSGVDPYQDREEEITDYSNYTPKDEASGDDEDEEDNSLVNDEDLYDDK) is disordered. Residues 270–291 (SGDDEDEEDNSLVNDEDLYDDK) show a composition bias toward acidic residues.

It belongs to the universal ribosomal protein uS2 family.

In Treponema denticola (strain ATCC 35405 / DSM 14222 / CIP 103919 / JCM 8153 / KCTC 15104), this protein is Small ribosomal subunit protein uS2.